The sequence spans 57 residues: MKLTKFEIARILGARSLQISSGAYATIETKCDSSLKIAYEEIKQGKVPLKPIRPVKA.

Belongs to the archaeal Rpo6/eukaryotic RPB6 RNA polymerase subunit family. As to quaternary structure, part of the RNA polymerase complex.

Its subcellular location is the cytoplasm. It carries out the reaction RNA(n) + a ribonucleoside 5'-triphosphate = RNA(n+1) + diphosphate. Functionally, DNA-dependent RNA polymerase (RNAP) catalyzes the transcription of DNA into RNA using the four ribonucleoside triphosphates as substrates. The sequence is that of DNA-directed RNA polymerase subunit Rpo6 from Methanocaldococcus jannaschii (strain ATCC 43067 / DSM 2661 / JAL-1 / JCM 10045 / NBRC 100440) (Methanococcus jannaschii).